We begin with the raw amino-acid sequence, 117 residues long: NADH-ubiquinone oxidoreductase chain 3 (117 aa).

A run of 3 helical transmembrane segments spans residues 3–23 (LLLT…IVSF), 56–76 (FFLV…LLPL), and 85–105 (PMFT…GLIY).

It belongs to the complex I subunit 3 family.

It localises to the mitochondrion membrane. It carries out the reaction a ubiquinone + NADH + 5 H(+)(in) = a ubiquinol + NAD(+) + 4 H(+)(out). Functionally, core subunit of the mitochondrial membrane respiratory chain NADH dehydrogenase (Complex I) that is believed to belong to the minimal assembly required for catalysis. Complex I functions in the transfer of electrons from NADH to the respiratory chain. The immediate electron acceptor for the enzyme is believed to be ubiquinone. The polypeptide is NADH-ubiquinone oxidoreductase chain 3 (MT-ND3) (Tetraodon nigroviridis (Spotted green pufferfish)).